We begin with the raw amino-acid sequence, 355 residues long: Ubiquinone biosynthesis protein COQ4 homolog, mitochondrial (355 aa).

The Zn(2+) site is built by His134, Asp135, His138, and Glu150.

It belongs to the COQ4 family. In terms of assembly, component of a multi-subunit COQ enzyme complex. Requires Zn(2+) as cofactor.

Its subcellular location is the mitochondrion inner membrane. The catalysed reaction is a 4-hydroxy-3-methoxy-5-(all-trans-polyprenyl)benzoate + H(+) = a 2-methoxy-6-(all-trans-polyprenyl)phenol + CO2. It functions in the pathway cofactor biosynthesis; ubiquinone biosynthesis. Its function is as follows. Lyase that catalyzes the C1-decarboxylation of 4-hydroxy-3-methoxy-5-(all-trans-polyprenyl)benzoic acid into 2-methoxy-6-(all-trans-polyprenyl)phenol during ubiquinone biosynthesis. In Plasmodium falciparum (isolate 3D7), this protein is Ubiquinone biosynthesis protein COQ4 homolog, mitochondrial.